Reading from the N-terminus, the 300-residue chain is Ribosomal protein L11 methyltransferase (300 aa).

S-adenosyl-L-methionine contacts are provided by threonine 152, glycine 173, aspartate 195, and asparagine 234.

It belongs to the methyltransferase superfamily. PrmA family.

It is found in the cytoplasm. The enzyme catalyses L-lysyl-[protein] + 3 S-adenosyl-L-methionine = N(6),N(6),N(6)-trimethyl-L-lysyl-[protein] + 3 S-adenosyl-L-homocysteine + 3 H(+). Methylates ribosomal protein L11. In Burkholderia orbicola (strain MC0-3), this protein is Ribosomal protein L11 methyltransferase.